Here is a 153-residue protein sequence, read N- to C-terminus: Transcriptional repressor NrdR (153 aa).

A zinc finger lies at 3–34 (CPYCNADDTKVIDSRLAAEGAQVRRRRQCNQC). An ATP-cone domain is found at 49–139 (PRIIKSNGRI…VYRDFQDIEA (91 aa)).

This sequence belongs to the NrdR family. It depends on Zn(2+) as a cofactor.

In terms of biological role, negatively regulates transcription of bacterial ribonucleotide reductase nrd genes and operons by binding to NrdR-boxes. In Psychrobacter sp. (strain PRwf-1), this protein is Transcriptional repressor NrdR.